Consider the following 420-residue polypeptide: Light-independent protochlorophyllide reductase subunit N (420 aa).

Residues Cys-21, Cys-46, and Cys-103 each coordinate [4Fe-4S] cluster.

Belongs to the BchN/ChlN family. As to quaternary structure, protochlorophyllide reductase is composed of three subunits; BchL, BchN and BchB. Forms a heterotetramer of two BchB and two BchN subunits. Requires [4Fe-4S] cluster as cofactor.

The enzyme catalyses chlorophyllide a + oxidized 2[4Fe-4S]-[ferredoxin] + 2 ADP + 2 phosphate = protochlorophyllide a + reduced 2[4Fe-4S]-[ferredoxin] + 2 ATP + 2 H2O. It participates in porphyrin-containing compound metabolism; bacteriochlorophyll biosynthesis (light-independent). Component of the dark-operative protochlorophyllide reductase (DPOR) that uses Mg-ATP and reduced ferredoxin to reduce ring D of protochlorophyllide (Pchlide) to form chlorophyllide a (Chlide). This reaction is light-independent. The NB-protein (BchN-BchB) is the catalytic component of the complex. This is Light-independent protochlorophyllide reductase subunit N from Chlorobium phaeobacteroides (strain DSM 266 / SMG 266 / 2430).